The chain runs to 61 residues: Probable tautomerase SMU_1087 (61 aa).

The active-site Proton acceptor; via imino nitrogen is Pro2.

It belongs to the 4-oxalocrotonate tautomerase family.

This Streptococcus mutans serotype c (strain ATCC 700610 / UA159) protein is Probable tautomerase SMU_1087.